Reading from the N-terminus, the 34-residue chain is Dermaseptin-H5 (34 aa).

Expressed by the skin glands.

Its subcellular location is the secreted. Has antimicrobial activity. This chain is Dermaseptin-H5, found in Pithecopus hypochondrialis (Orange-legged leaf frog).